A 348-amino-acid chain; its full sequence is Dihydroorotase (348 aa).

Residues H17 and H19 each coordinate Zn(2+). Substrate-binding positions include 19–21 (HLR) and N45. The Zn(2+) site is built by K103, H140, and H178. Position 103 is an N6-carboxylysine (K103). Residue H140 coordinates substrate. Position 223 (L223) interacts with substrate. A Zn(2+)-binding site is contributed by D251. Residue D251 is part of the active site. Substrate contacts are provided by H255 and A267.

It belongs to the metallo-dependent hydrolases superfamily. DHOase family. Class II DHOase subfamily. Homodimer. It depends on Zn(2+) as a cofactor.

The catalysed reaction is (S)-dihydroorotate + H2O = N-carbamoyl-L-aspartate + H(+). Its pathway is pyrimidine metabolism; UMP biosynthesis via de novo pathway; (S)-dihydroorotate from bicarbonate: step 3/3. Catalyzes the reversible cyclization of carbamoyl aspartate to dihydroorotate. This chain is Dihydroorotase, found in Yersinia pseudotuberculosis serotype O:1b (strain IP 31758).